Consider the following 152-residue polypeptide: UPF0266 membrane protein YobD (152 aa).

Transmembrane regions (helical) follow at residues 6–26, 45–65, and 67–87; these read LLLI…QFIM, VDSV…VTSH, and AQMT…IFWI.

It belongs to the UPF0266 family.

It localises to the cell inner membrane. This is UPF0266 membrane protein YobD from Salmonella paratyphi C (strain RKS4594).